Here is a 324-residue protein sequence, read N- to C-terminus: Glyceraldehyde-3-phosphate dehydrogenase 1 (324 aa).

Residues 13–14, aspartate 35, and lysine 85 contribute to the NAD(+) site; that span reads RI. Residues 157–159, threonine 188, 217–218, and arginine 240 contribute to the D-glyceraldehyde 3-phosphate site; these read SCT and TG. The Nucleophile role is filled by cysteine 158. Asparagine 322 is a binding site for NAD(+).

It belongs to the glyceraldehyde-3-phosphate dehydrogenase family. Homotetramer.

It is found in the cytoplasm. It carries out the reaction D-glyceraldehyde 3-phosphate + phosphate + NAD(+) = (2R)-3-phospho-glyceroyl phosphate + NADH + H(+). The protein operates within carbohydrate degradation; glycolysis; pyruvate from D-glyceraldehyde 3-phosphate: step 1/5. This is Glyceraldehyde-3-phosphate dehydrogenase 1 (GPD-1) from Globodera rostochiensis (Golden nematode worm).